A 107-amino-acid chain; its full sequence is Large ribosomal subunit protein P1 (107 aa).

Residues 67–82 (PTATSAAAAPAAGEAS) are compositionally biased toward low complexity. Positions 67-107 (PTATSAAAAPAAGEASGKAEEKKKEEPEEEGDDDMGFGLFD) are disordered. The segment covering 83 to 92 (GKAEEKKKEE) has biased composition (basic and acidic residues).

This sequence belongs to the eukaryotic ribosomal protein P1/P2 family. In terms of assembly, P1 and P2 exist as dimers at the large ribosomal subunit.

In terms of biological role, plays an important role in the elongation step of protein synthesis. This chain is Large ribosomal subunit protein P1, found in Leishmania peruviana.